Consider the following 381-residue polypeptide: MAKQLEKSSKIGNEDVFQKIANHEQIVFCNDPVSGLQAIIAIHDTTLGPALGGTRMYPYKNVDEALEDVLRLSEGMTYKCAAADIDFGGGKAVIIGDPEKDKSPALFRAFGQFVESLNGRFYTGTDMGTTMDDFVHAQKETNFINGIPEQYGGSGDSSIPTAQGVIYALKATNQYLFGSDSLSGKTYAIQGLGKVGYKVAEQLLKAGADLFVTDIHENVLNSIKQKSEELGGSVTIVKSDDIYSVQADIFVPCAMGGIINDKTIPKLKVKAVVGSANNQLKDLRHANVLNEKGILYAPDYIVNAGGLIQVADELYGPNKERVLLKTKEIYRSLLEIFNQAALDCITTVEAANRKCQKTIEGQQTRNSFFSRGRRPKWNIKE.

Residue R55 coordinates NAD(+). K79 provides a ligand contact to L-phenylalanine. K91 is a catalytic residue. Residues D126, S157, T161, 191–197 (GLGKVGY), 214–215 (DI), 254–255 (AM), and 275–277 (SAN) each bind NAD(+). Residue N277 coordinates L-phenylalanine.

Belongs to the Glu/Leu/Phe/Val dehydrogenases family.

It catalyses the reaction L-phenylalanine + NAD(+) + H2O = 3-phenylpyruvate + NH4(+) + NADH + H(+). It participates in amino-acid biosynthesis; L-phenylalanine biosynthesis; L-phenylalanine from phenylpyruvate (PDH route): step 1/1. Its function is as follows. Catalyzes the reversible NAD(+)-dependent oxidative deamination of L-phenylalanine to phenylpyruvate. This is Phenylalanine dehydrogenase from Lysinibacillus sphaericus (Bacillus sphaericus).